A 528-amino-acid chain; its full sequence is GMP synthase [glutamine-hydrolyzing] (528 aa).

The 197-residue stretch at 3 to 199 (KVAIIDFGSQ…FLDIAGCQKD (197 aa)) folds into the Glutamine amidotransferase type-1 domain. The active-site Nucleophile is Cys83. Active-site residues include His174 and Glu176. One can recognise a GMPS ATP-PPase domain in the interval 200–394 (WTVTSFIDDQ…LGISTEILMR (195 aa)). 227-233 (SGGVDSS) provides a ligand contact to ATP.

As to quaternary structure, homodimer.

The enzyme catalyses XMP + L-glutamine + ATP + H2O = GMP + L-glutamate + AMP + diphosphate + 2 H(+). It functions in the pathway purine metabolism; GMP biosynthesis; GMP from XMP (L-Gln route): step 1/1. In terms of biological role, catalyzes the synthesis of GMP from XMP. The protein is GMP synthase [glutamine-hydrolyzing] of Ehrlichia ruminantium (strain Gardel).